The following is a 327-amino-acid chain: Aldo-keto reductase family 1 member A1 (327 aa).

Residues 13 to 22 (GQKIPLIGLG), Thr23, Trp24, and Asp47 each bind NADP(+). Residue Tyr52 is the Proton donor of the active site. Residues Ser164, Asn165, Ser213, Leu215, Ser217, Lys265, Ser266, Val267, Thr268, Arg271, Gln274, and Asn275 each coordinate NADP(+).

It belongs to the aldo/keto reductase family.

The protein resides in the cytoplasm. The protein localises to the cytosol. It is found in the apical cell membrane. The enzyme catalyses a primary alcohol + NADP(+) = an aldehyde + NADPH + H(+). It carries out the reaction S-nitroso-CoA + NADPH + H(+) = sulfinamide-CoA + NADP(+). The catalysed reaction is S-nitrosoglutathione + NADPH + H(+) = S-(hydroxysulfenamide)glutathione + NADP(+). In terms of biological role, catalyzes the NADPH-dependent reduction of a wide variety of carbonyl-containing compounds to their corresponding alcohols. Displays enzymatic activity towards endogenous metabolites such as aromatic and aliphatic aldehydes, ketones, monosaccharides and bile acids. Acts as an aldehyde-detoxification enzyme. Also acts as an inhibitor of protein S-nitrosylation by mediating degradation of S-nitroso-coenzyme A (S-nitroso-CoA), a cofactor required to S-nitrosylate proteins. Also acts as a S-nitroso-glutathione reductase by catalyzing the NADPH-dependent reduction of S-nitrosoglutathione. Displays no reductase activity towards retinoids. This is Aldo-keto reductase family 1 member A1 (akr1a1) from Xenopus tropicalis (Western clawed frog).